The sequence spans 239 residues: DNA oxidative demethylase ALKBH2 (239 aa).

The short motif at 3–7 (KFLVR) is the PCNA-binding element. The segment at 11 to 32 (RDLQGGGEEPAPTGGASGDLKS) is disordered. Residues 80 to 82 (FGK) and 100 to 102 (YTF) each bind substrate. One can recognise a Fe2OG dioxygenase domain in the interval 130–235 (TFNFVLVNRY…RVNLTFRKIL (106 aa)). The 2-oxoglutarate site is built by Asn-137, Tyr-139, and His-149. His-149 and Asp-151 together coordinate Fe cation. Asp-152 provides a ligand contact to substrate. The 2-oxoglutarate site is built by His-214, Arg-226, Thr-230, and Arg-232. A Fe cation-binding site is contributed by His-214.

This sequence belongs to the alkB family. As to quaternary structure, interacts with PCNA homotrimer; this interaction is enhanced during the S-phase of the cell cycle. Interacts with nucleolar proteins NCL, UBTF and NPM1. Interacts with XRCC5-XRCC6 heterodimer. Requires Fe(2+) as cofactor. In terms of tissue distribution, detected in liver, testis and kidney (at protein level). Detected in heart and testis.

It localises to the nucleus. It is found in the nucleolus. Its subcellular location is the nucleoplasm. The catalysed reaction is a methylated nucleobase within DNA + 2-oxoglutarate + O2 = a nucleobase within DNA + formaldehyde + succinate + CO2. It catalyses the reaction an N(1)-methyl-2'-deoxyadenosine in double-stranded DNA + 2-oxoglutarate + O2 = a 2'-deoxyadenosine in double-stranded DNA + formaldehyde + succinate + CO2 + H(+). The enzyme catalyses an N(1)-methyl-2'-deoxyadenosine in single-stranded DNA + 2-oxoglutarate + O2 = a 2'-deoxyadenosine in single-stranded DNA + formaldehyde + succinate + CO2 + H(+). It carries out the reaction an N(3)-methyl-2'-deoxycytidine in double-stranded DNA + 2-oxoglutarate + O2 = a 2'-deoxycytidine in double-stranded DNA + formaldehyde + succinate + CO2 + H(+). The catalysed reaction is an N(3)-methyl-2'-deoxycytidine in single-stranded DNA + 2-oxoglutarate + O2 = a 2'-deoxycytidine in single-stranded DNA + formaldehyde + succinate + CO2 + H(+). It catalyses the reaction a 1,N(6)-etheno-2'-deoxyadenosine in double-stranded DNA + 2-oxoglutarate + O2 + H2O = a 2'-deoxyadenosine in double-stranded DNA + glyoxal + succinate + CO2. The enzyme catalyses a 1,N(6)-etheno-2'-deoxyadenosine in single-stranded DNA + 2-oxoglutarate + O2 + H2O = a 2'-deoxyadenosine in single-stranded DNA + glyoxal + succinate + CO2. It carries out the reaction a 3,N(4)-etheno-2'-deoxycytidine in double-stranded DNA + 2-oxoglutarate + O2 + H2O = a 2'-deoxycytidine in double-stranded DNA + glyoxal + succinate + CO2. The catalysed reaction is a 3,N(4)-etheno-2'-deoxycytidine in single-stranded DNA + 2-oxoglutarate + O2 + H2O = a 2'-deoxycytidine in single-stranded DNA + glyoxal + succinate + CO2. It catalyses the reaction a 1,N(2)-etheno-2'-deoxyguanosine in double-stranded DNA + 2-oxoglutarate + O2 + H2O = a 2'-deoxyguanosine in double-stranded DNA + glyoxal + succinate + CO2. With respect to regulation, activated by magnesium ions. In terms of biological role, dioxygenase that repairs alkylated nucleic acid bases by direct reversal oxidative dealkylation. Can process both double-stranded (ds) and single-stranded (ss) DNA substrates, with a strong preference for dsDNA. Uses molecular oxygen, 2-oxoglutarate and iron as cofactors to oxidize the alkyl groups that are subsequently released as aldehydes, regenerating the undamaged bases. Probes the base pair stability, locates a weakened base pair and flips the damaged base to accommodate the lesion in its active site for efficient catalysis. Repairs monoalkylated bases, specifically N1-methyladenine and N3-methylcytosine, as well as higher order alkyl adducts such as bases modified with exocyclic bridged adducts known as etheno adducts including 1,N6-ethenoadenine, 3,N4-ethenocytosine and 1,N2-ethenoguanine. Acts as a gatekeeper of genomic integrity under alkylation stress. Efficiently repairs alkylated lesions in ribosomal DNA (rDNA). These lesions can cause ss- and dsDNA strand breaks that severely impair rDNA transcription. In a response mechanism to DNA damage, associates with PCNA at replication forks to repair alkylated adducts prior to replication. The protein is DNA oxidative demethylase ALKBH2 (Alkbh2) of Mus musculus (Mouse).